Reading from the N-terminus, the 746-residue chain is Exocyst complex component 3-like protein (746 aa).

Residues 1–23 (MDSAAKDEMQPALSPGPEWPEQE) are disordered. The mediates interaction with EXOC2, EXOC4 and EXOC5 stretch occupies residues 1–370 (MDSAAKDEMQ…DVSQLEPLLT (370 aa)).

The protein belongs to the SEC6 family. Interacts with EXOC2, EXOC4 and EXOC5; may be part of the exocyst.

The protein resides in the cytoplasmic vesicle. It localises to the secretory vesicle. Its function is as follows. As part of the exocyst, may play a role in regulated exocytosis of insulin granules. This is Exocyst complex component 3-like protein (EXOC3L1) from Homo sapiens (Human).